The primary structure comprises 153 residues: Superoxide dismutase [Cu-Zn] (153 aa).

The Cu cation site is built by H45, H47, and H62. An intrachain disulfide couples C56 to C145. Residues H62, H70, H79, and D82 each coordinate Zn(2+). Residue H119 participates in Cu cation binding.

It belongs to the Cu-Zn superoxide dismutase family. As to quaternary structure, homodimer. Requires Cu cation as cofactor. The cofactor is Zn(2+).

Its subcellular location is the cytoplasm. The enzyme catalyses 2 superoxide + 2 H(+) = H2O2 + O2. In terms of biological role, destroys radicals which are normally produced within the cells and which are toxic to biological systems. This Drosophila willistoni (Fruit fly) protein is Superoxide dismutase [Cu-Zn].